We begin with the raw amino-acid sequence, 187 residues long: Elongation factor P (187 aa).

The protein belongs to the elongation factor P family.

Its subcellular location is the cytoplasm. Its pathway is protein biosynthesis; polypeptide chain elongation. Involved in peptide bond synthesis. Stimulates efficient translation and peptide-bond synthesis on native or reconstituted 70S ribosomes in vitro. Probably functions indirectly by altering the affinity of the ribosome for aminoacyl-tRNA, thus increasing their reactivity as acceptors for peptidyl transferase. The sequence is that of Elongation factor P from Erythrobacter litoralis (strain HTCC2594).